Consider the following 282-residue polypeptide: MKVITTVKDMQQIAGELRASGKEIGFVPTMGYLHEGHATLLRQAKKENDIVILSVFVNPLQFGPDEDFDRYPRDIKRDERVAKEAGVDYLFYPSVDEMYPAEQTTKIEVVKRTNVLCGKRRPVHFAGVATVLMKLFHITMPTRAYFGMKDAQQVAVVEGIVSDFHIPVTIVPVEIVREADGLAKSSRNVYLSEQERKEAPHLYRSLCIAKQKIEEGERHPRNITTVVKEYIEANTNGIVDYVDIYAYPALTPLEIIKGRIILAIAVQFKNARLIDNITLTVQ.

30-37 (MGYLHEGH) is a binding site for ATP. His-37 (proton donor) is an active-site residue. Residue Gln-61 coordinates (R)-pantoate. Gln-61 contacts beta-alanine. 147 to 150 (GMKD) contacts ATP. Gln-153 contacts (R)-pantoate. ATP contacts are provided by residues Val-176 and 184–187 (KSSR).

Belongs to the pantothenate synthetase family. Homodimer.

Its subcellular location is the cytoplasm. It carries out the reaction (R)-pantoate + beta-alanine + ATP = (R)-pantothenate + AMP + diphosphate + H(+). Its pathway is cofactor biosynthesis; (R)-pantothenate biosynthesis; (R)-pantothenate from (R)-pantoate and beta-alanine: step 1/1. Functionally, catalyzes the condensation of pantoate with beta-alanine in an ATP-dependent reaction via a pantoyl-adenylate intermediate. In Bacillus cytotoxicus (strain DSM 22905 / CIP 110041 / 391-98 / NVH 391-98), this protein is Pantothenate synthetase.